Reading from the N-terminus, the 485-residue chain is Sulfate adenylyltransferase subunit 1 (485 aa).

Residues Lys-30–Arg-243 form the tr-type G domain. Residues Gly-39–Ser-46 form a G1 region. Gly-39–Ser-46 lines the GTP pocket. The segment at Gly-97 to Asp-101 is G2. The G3 stretch occupies residues Asp-118–Gly-121. GTP-binding positions include Asp-118–His-122 and Asn-173–Asp-176. The interval Asn-173 to Asp-176 is G4. The segment at Ser-210–Leu-212 is G5.

The protein belongs to the TRAFAC class translation factor GTPase superfamily. Classic translation factor GTPase family. CysN/NodQ subfamily. Heterodimer composed of CysD, the smaller subunit, and CysN.

The enzyme catalyses sulfate + ATP + H(+) = adenosine 5'-phosphosulfate + diphosphate. The protein operates within sulfur metabolism; hydrogen sulfide biosynthesis; sulfite from sulfate: step 1/3. With CysD forms the ATP sulfurylase (ATPS) that catalyzes the adenylation of sulfate producing adenosine 5'-phosphosulfate (APS) and diphosphate, the first enzymatic step in sulfur assimilation pathway. APS synthesis involves the formation of a high-energy phosphoric-sulfuric acid anhydride bond driven by GTP hydrolysis by CysN coupled to ATP hydrolysis by CysD. In Shewanella oneidensis (strain ATCC 700550 / JCM 31522 / CIP 106686 / LMG 19005 / NCIMB 14063 / MR-1), this protein is Sulfate adenylyltransferase subunit 1.